A 283-amino-acid polypeptide reads, in one-letter code: Protein MGARP (283 aa).

A disordered region spans residues 1-36 (MYLRRAVSKTLALPRRAPPGPAPLGKDASLRRMSSR). Residues 1-41 (MYLRRAVSKTLALPRRAPPGPAPLGKDASLRRMSSRKFPGT) are Cytoplasmic-facing. A helical; Anchor for type IV membrane protein transmembrane segment spans residues 42 to 64 (SGSNMIYYLVVGVTVSAGGYYTY). The Mitochondrial intermembrane portion of the chain corresponds to 65 to 283 (KALTSKQVRR…VTEETASPQG (219 aa)). Disordered stretches follow at residues 78–101 (VAEPKEQTKAELQPLPGEKEEHVA) and 118–283 (AESV…SPQG). The span at 128-160 (EAAVVLPEESQASAPSEVPAEAAVVEASLSSSE) shows a compositional bias: low complexity. 2 stretches are compositionally biased toward polar residues: residues 171–184 (VETTESVPESTQEV) and 199–220 (ADTSQEGADTSQEGADTSQEGA). Residues 221 to 245 (DTTKEEADNSKEAEGTTTEDPRSIS) are compositionally biased toward basic and acidic residues.

In terms of assembly, interacts with RHOT1/Miro-1, RHOT2/Miro-2, TRAK1/OIP106 and TRAK2/GRIF1. Expressed in the ovary, testis, brain, adrenal glands and the compartments of the visual nervous system. Expressed in corneal endothelium (CE) (at protein level). Expressed in steroidogenic tissues with the highest level of expression observed in the adrenal gland. Weakly expressed in placenta. Weakly expressed in astrocytes and neurons under normoxia. Strongly expressed in astrocytes and neurons under hypoxia. Expressed in each layer of the retina, with particularly higher staining in the inner segment of the photoreceptor (IS), the outer plexiform layer (OPL) and the ganglion cell layer (GCL).

The protein localises to the mitochondrion. It localises to the mitochondrion outer membrane. It is found in the mitochondrion inner membrane. Functionally, plays a role in the trafficking of mitochondria along microtubules. Regulates the kinesin-mediated axonal transport of mitochondria to nerve terminals along microtubules during hypoxia. Participates in the translocation of TRAK2/GRIF1 from the cytoplasm to the mitochondrion. Also plays a role in steroidogenesis through maintenance of mitochondrial abundance and morphology. Plays an inhibitory role during neocortex development by regulating mitochondrial morphology, distribution and motility in neocortical neurons. The polypeptide is Protein MGARP (Mgarp) (Mus musculus (Mouse)).